The chain runs to 143 residues: uncharacterized protein (143 aa).

A disordered region spans residues 35-59 (ITKDRGDRDDGRYGEPRIQRKPGQL). Basic and acidic residues predominate over residues 36-52 (TKDRGDRDDGRYGEPRI).

This is an uncharacterized protein from Streptomyces fradiae (Streptomyces roseoflavus).